The primary structure comprises 578 residues: MKNNWIIILVLVIVIIAAVLYLIGYFMRKKNQEQLDELEVRKEALFDLPVFEEIDDIKKMHLVGQSQNSFREWNQRWVELSTRSFAELESQIYEVENQNEIFRFMKAKKAVVEANETMTEMEAEVEVIRNGLKELRESEERNSLEVQKALDVYEELSKSLKDDKASFGPAYSEIQKQLRNVEIEFTQFVTLNTSGDPIEAREVLEDAERHTYELEDLMKRIPPMYEELNETFPDQLKEIEEGYNQLLADDYVFPEQNFAEEIQHAKKRVENSMADLEKTEIAAVEVANRDTATAIDALYEVMEREIEAKKYVVTNQKIIDDYISHSLKNNRQLMIELDHVSQSYTLNNNELGRSRGFQTEIEEIIRRQKDLEPRMKEHTVPYSEIQAFYKECYKILDDIENQQLEIDASLKELRKGEKVAQEKVDEYEFRLRSIKRYVEKQRLPGLSADYLEFFYVATDRIEDLSRALNKMRINMDEINRLCDLCEDDLELLDKKTKDLVNAAALTEQMMQYANRYRHTHENIRAALDKSMYLFSTEFRYQDALDEIGTALEAVEPGAFKRIEDFYFKNINNPNLTAI.

The Extracellular portion of the chain corresponds to 1–8; it reads MKNNWIII. The chain crosses the membrane as a helical span at residues 9-27; sequence LVLVIVIIAAVLYLIGYFM. The Cytoplasmic portion of the chain corresponds to 28–578; the sequence is RKKNQEQLDE…NINNPNLTAI (551 aa). 3 coiled-coil regions span residues 103 to 165, 256 to 285, and 394 to 490; these read RFMK…DDKA, QNFA…AAVE, and KILD…DDLE.

Belongs to the EzrA family.

The protein localises to the cell membrane. Functionally, negative regulator of FtsZ ring formation; modulates the frequency and position of FtsZ ring formation. Inhibits FtsZ ring formation at polar sites. Interacts either with FtsZ or with one of its binding partners to promote depolymerization. In Enterococcus faecalis (strain ATCC 700802 / V583), this protein is Septation ring formation regulator EzrA.